Consider the following 767-residue polypeptide: MHPTLISAPISSSANDAHAGTSQGSHQGHRIQVIRRDGSSTPLNIGKIRAVVDWACLGLEVNSIALEAGLTTRLREGISTREIQDNLISCALEMCSPNEPDWRYVAGRLHVWSLWKDTLVRRGYQYGQYLRTVQTKVTNGEYDSRILTYSEGELQEAGCWINSDWDTDYDYAGAVLLTSRYLLPNELPQEALLTCALLLASVEAPDRRLQWARRFYESIAARRISLATPILANLRVPGGSLTSCFIVAMEDNLESIFGEITNAARISKNGGGVGVNVSRIRATGSWVMGKPNASGGVIPWTKLLNDTAIAVNQGGRRAGAVTVGLDVWHLDVPEFLEMQAENGDQRRKAYDIFPQLILPDEFMRRVINKEDWTLVDPYEVREKMGIELAELWGEQFEGAYREIESNLDTTITLYKRINARELFKQIMRTQVETGMPYLSFKDTINKANPNKHLGYIPGTNLCCESFSNVTPGQDAHCCNLVSLNLANLDLQDIAGVSQIAVRMLDNTIELTAPPFADAKSHNNKYRTIGVGAMGLADWLAKRRLNYDELADINRLFEEIGYWCTQSSMELAKERGAYPAFPGSDWQKGLLIGSKPVSWFQANAAKPERWEKLSNDIQTHGIRNSHITAIAPNTSSSLVQGCTASILPVYSRFFYDKWAKGTVPIAPPFIGNCFWFYPENKTMDQRKVVKAVAAIQQWTDTGISMELLFNLNAGIYFPEEPERSLNAKDIFDTLVMAWEAGCKAIYYIRTVQKDDFKDSSDGCVACAN.

The disordered stretch occupies residues 1–30; it reads MHPTLISAPISSSANDAHAGTSQGSHQGHR. Residues 9–26 show a composition bias toward polar residues; it reads PISSSANDAHAGTSQGSH. An ATP-cone domain is found at 31–120; sequence IQVIRRDGSS…VWSLWKDTLV (90 aa). Substrate is bound by residues Thr-228, 243–244, Gly-272, 460–464, and 631–635; these read SC, NLCCE, and PNTSS. Cys-244 and Cys-478 are joined by a disulfide. Catalysis depends on Asn-460, which acts as the Proton acceptor. The active-site Cysteine radical intermediate is the Cys-462. Catalysis depends on Glu-464, which acts as the Proton acceptor.

Belongs to the ribonucleoside diphosphate reductase large chain family. As to quaternary structure, tetramer of two alpha and two beta subunits.

The catalysed reaction is a 2'-deoxyribonucleoside 5'-diphosphate + [thioredoxin]-disulfide + H2O = a ribonucleoside 5'-diphosphate + [thioredoxin]-dithiol. Under complex allosteric control mediated by deoxynucleoside triphosphates and ATP binding. The type of nucleotide bound at the specificity site determines substrate preference. It seems probable that ATP makes the enzyme reduce CDP and UDP, dGTP favors ADP reduction and dTTP favors GDP reduction. Provides the precursors necessary for DNA synthesis. Catalyzes the biosynthesis of deoxyribonucleotides from the corresponding ribonucleotides. The sequence is that of Ribonucleoside-diphosphate reductase subunit alpha (nrdA) from Synechocystis sp. (strain ATCC 27184 / PCC 6803 / Kazusa).